A 1228-amino-acid chain; its full sequence is Multimerin-1 (1228 aa).

The signal sequence occupies residues 1 to 19; that stretch reads MKGARLFVLLSSLWSGGIG. A glycan (N-linked (GlcNAc...) asparagine) is linked at Asn21. A disordered region spans residues 68-98; the sequence is TPEARTSEDSLLKSTLPPSETSAPAEGVRNQ. Positions 79–89 are enriched in polar residues; that stretch reads LKSTLPPSETS. Residues Asn97, Asn114, and Asn120 are each glycosylated (N-linked (GlcNAc...) asparagine). The N-linked (GlcNAc...) (complex) asparagine glycan is linked to Asn136. The tract at residues 157–200 is disordered; that stretch reads NTVGGTGGIGGVGGTGGVGNRAPRETYLSRGDSSSSQRTDYQKS. The span at 160 to 175 shows a compositional bias: gly residues; that stretch reads GGTGGIGGVGGTGGVG. The Cell attachment site motif lies at 186-188; sequence RGD. Positions 187 to 200 are enriched in polar residues; it reads GDSSSSQRTDYQKS. The region spanning 207–282 is the EMI domain; the sequence is GKNWCAYVHT…PGYSGPKCQL (76 aa). 3 disulfides stabilise this stretch: Cys211–Cys272, Cys238–Cys245, and Cys271–Cys280. Thr216 carries an O-linked (Fuc) threonine glycan. Thr265 carries an O-linked (Fuc) threonine glycan. 2 coiled-coil regions span residues 333-365 and 400-430; these read MKLTLLQKKIDNISLTVNDVRNTYSSLEGKVSE and NDMQETVAQLFKTVSSLSEDLESTRQIIQKV. Residue Asn344 is glycosylated (N-linked (GlcNAc...) asparagine). N-linked (GlcNAc...) asparagine glycans are attached at residues Asn431, Asn507, Asn541, Asn576, Asn618, Asn680, Asn729, Asn783, Asn816, Asn828, Asn840, Asn921, Asn933, Asn942, Asn981, and Asn1020. Positions 503–523 form a coiled coil; it reads YESLNKTLSKLKEVHEQLLST. 2 coiled-coil regions span residues 580 to 650 and 675 to 726; these read SLEM…EILQ and RKKI…EMED. Residues 819 to 869 are a coiled coil; sequence NFQKMYQMFNETTSQVRKYQQNMSHLEEKLLLTTKISKNFETRLQDIESKV. The EGF-like domain occupies 1041–1077; the sequence is EYSSCSRHPCQNGGTCINGRTSFTCACRHPFTGDNCT. Intrachain disulfides connect Cys1045–Cys1056, Cys1050–Cys1065, and Cys1067–Cys1076. O-linked (Fuc) threonine glycosylation is present at Thr1055. Asn1075 is a glycosylation site (N-linked (GlcNAc...) asparagine). Residues 1096 to 1228 enclose the C1q domain; it reads RYAPMVAFFA…TFSGYLLYRT (133 aa).

In terms of assembly, multimeric. Composed of varying sized, disulfide-linked multimers, the smallest of which is a homotrimer. Proteolysis of the promultimerin in the N-terminal region, leads to the mature p155 form that is stored in platelets. Interacts with factor V/Va. Post-translationally, the N-terminus is blocked. In terms of processing, extensively N-glycosylated. O-fucosylated within the EMI domain (at Thr-216 and Thr-265) by FUT10/POFUT3 and FUT11/POFUT4. O-fucosylation at Thr-216 and Thr-1055 are required for facilitating protein folding and secretion. Synthesized by endothelial cells and megakaryocytes. Stored in platelet alpha granules and endothelial cell Weibel-Palade bodies, following activation of these cells, it is released and attached to megakaryocytes, platelets, endothelium and subendothelium of blood vessels. Not found in plasma. Found in vascular tissues such as placenta, lung, and liver.

It is found in the secreted. Carrier protein for platelet (but not plasma) factor V/Va. Plays a role in the storage and stabilization of factor V in platelets. Upon release following platelet activation, may limit platelet and plasma factor Va-dependent thrombin generation. Ligand for integrin alpha-IIb/beta-3 and integrin alpha-V/beta-3 on activated platelets, and may function as an extracellular matrix or adhesive protein. The protein is Multimerin-1 (MMRN1) of Homo sapiens (Human).